The chain runs to 391 residues: tRNA-specific 2-thiouridylase MnmA (391 aa).

ATP-binding positions include G9 to S16 and M35. An interaction with target base in tRNA region spans residues N95–D97. Residue C100 is the Nucleophile of the active site. A disulfide bridge links C100 with C196. ATP is bound at residue G124. Residues K146–Q148 are interaction with tRNA. The active-site Cysteine persulfide intermediate is C196. The interaction with tRNA stretch occupies residues R308–Y309.

The protein belongs to the MnmA/TRMU family.

The protein resides in the cytoplasm. It catalyses the reaction S-sulfanyl-L-cysteinyl-[protein] + uridine(34) in tRNA + AH2 + ATP = 2-thiouridine(34) in tRNA + L-cysteinyl-[protein] + A + AMP + diphosphate + H(+). Functionally, catalyzes the 2-thiolation of uridine at the wobble position (U34) of tRNA, leading to the formation of s(2)U34. This is tRNA-specific 2-thiouridylase MnmA from Burkholderia orbicola (strain MC0-3).